Consider the following 490-residue polypeptide: Apocarotenoid-15,15'-oxygenase (490 aa).

H183 contacts Fe cation. A substrate-binding site is contributed by S206. H238 serves as a coordination point for Fe cation. F303 is a substrate binding site. Positions 304 and 484 each coordinate Fe cation.

This sequence belongs to the carotenoid oxygenase family. Requires Fe(2+) as cofactor.

The enzyme catalyses all-trans-8'-apo-beta-carotenal + O2 = (2E,4E,6E)-2,6-dimethylocta-2,4,6-trienedial + all-trans-retinal. Cleaves a number of carotenals and carotenols in the all-trans configuration at the 15-15' double bond producing retinal or retinol, respectively. Also shows activity toward lycopenals and the corresponding alcohols. Does not cleave beta-carotene or lycopene. The sequence is that of Apocarotenoid-15,15'-oxygenase from Synechocystis sp. (strain ATCC 27184 / PCC 6803 / Kazusa).